Consider the following 340-residue polypeptide: uncharacterized protein (340 aa).

Residues Ala-58–Arg-307 form the Radical SAM core domain. [4Fe-4S] cluster-binding residues include Cys-72, Cys-76, and Cys-79. 2 helical membrane passes run Tyr-140–Leu-160 and Gln-243–Leu-263.

Requires [4Fe-4S] cluster as cofactor.

It localises to the cell membrane. This is an uncharacterized protein from Mycobacterium tuberculosis (strain CDC 1551 / Oshkosh).